The chain runs to 502 residues: Glycerol kinase (502 aa).

Position 13 (Thr-13) interacts with ADP. Positions 13, 14, and 15 each coordinate ATP. Sn-glycerol 3-phosphate is bound at residue Thr-13. Residue Arg-17 coordinates ADP. 4 residues coordinate sn-glycerol 3-phosphate: Arg-83, Glu-84, Tyr-136, and Asp-246. Arg-83, Glu-84, Tyr-136, Asp-246, and Gln-247 together coordinate glycerol. ADP-binding residues include Thr-268 and Gly-311. Residues Thr-268, Gly-311, Gln-315, and Gly-412 each coordinate ATP. ADP-binding residues include Gly-412 and Asn-416.

It belongs to the FGGY kinase family.

It carries out the reaction glycerol + ATP = sn-glycerol 3-phosphate + ADP + H(+). It functions in the pathway polyol metabolism; glycerol degradation via glycerol kinase pathway; sn-glycerol 3-phosphate from glycerol: step 1/1. Its activity is regulated as follows. Inhibited by fructose 1,6-bisphosphate (FBP). Its function is as follows. Key enzyme in the regulation of glycerol uptake and metabolism. Catalyzes the phosphorylation of glycerol to yield sn-glycerol 3-phosphate. This chain is Glycerol kinase, found in Francisella tularensis subsp. tularensis (strain FSC 198).